The primary structure comprises 249 residues: DNA repair protein RecO (249 aa).

Belongs to the RecO family.

In terms of biological role, involved in DNA repair and RecF pathway recombination. This chain is DNA repair protein RecO, found in Mycoplasma capricolum subsp. capricolum (strain California kid / ATCC 27343 / NCTC 10154).